Consider the following 653-residue polypeptide: MEKSGNHHHANESSENHDHKSEDHENKQHSDELHSSTPESQSESSEHSLVEVMEAVVDFIQTLSSEKDPLGEISPAVESFPEAVDSLVSKMESSGLGRDETEDSVFIDAVNRISKSVMRLRELKLDSTPVSSWLNRASSVQHRAVSLLDEEFRHLLDRSREEEKKNNNNNNHHDGSNSDHNNSSTNDSDRCVLQDHEEAEEESFHDFSPESISTLKKIAGAMISAGYEAECCMSYEMSRRHAFKEELTEVGFEGINVEDVQRIGWESLEGEIASWISIVRRCSTVLFPGELSLCNAVFPDQDHSSVRKRLFTGLVSAVTIRFLDFSGAVVLTKRSSEKLFKFLDMYETLRDLIPAVEQSDSDLIQEIKLAQTRLGEAAVTIFGELEKSIKSDNGRTPVPSGAVHPLTRYTMNYLKYACEYKETLDQVFQHYEANQTDNKPEPETKPRQQQREDDEEYKVSAFARQMIRVMELLDANLEIKSRLYRDPSLRFIFLMNNGRYILQKIKGSIEIRDLMGQSWTRKRSTELRQYHKSYQRETWGKVLQCMNQEGLQVNGKVSKPVLKERFKIFNAMFDEIHKTQSTWIVSDEQMQSELRVSISSLVIPAYRSFFGRYKQHLDSGKQTDKYVKYQPEDIESFIDDLFDGNPTSMARKR.

Composition is skewed to basic and acidic residues over residues 1–34 (MEKSGNHHHANESSENHDHKSEDHENKQHSDELH), 159–177 (SREEEKKNNNNNNHHDGSN), and 438–451 (NKPEPETKPRQQQR). Disordered regions lie at residues 1–50 (MEKS…HSLV), 159–190 (SREEEKKNNNNNNHHDGSNSDHNNSSTNDSDR), and 432–456 (EANQTDNKPEPETKPRQQQREDDEE).

Belongs to the EXO70 family. Interacts with ROH1A. Binds directly to B1L. Phosphorylated. In terms of tissue distribution, expressed in anthers, pollen and root trichoblast cells.

Its subcellular location is the cytoplasm. Required for global plant growth and for male transmission. Involved in the regulation of tip growth of pollen tube. The chain is Exocyst complex component EXO70C1 from Arabidopsis thaliana (Mouse-ear cress).